A 260-amino-acid polypeptide reads, in one-letter code: CD320 antigen (260 aa).

The first 28 residues, 1 to 28 (MARGGAGRAVALGLVLRLLFGLRTGLEA), serve as a signal peptide directing secretion. Over 29–208 (APAPAHTRVQ…DSSRNPSAYG (180 aa)) the chain is Extracellular. Positions 46 to 83 (SCPTDTFQCLTSGYCVPLSWRCDGDQDCSDGSDEEDCR) constitute an LDL-receptor class A 1 domain. Disulfide bonds link cysteine 47/cysteine 60, cysteine 54/cysteine 73, and cysteine 67/cysteine 82. Ca(2+)-binding residues include tryptophan 65, aspartate 68, aspartate 70, aspartate 72, aspartate 78, and glutamate 79. N-linked (GlcNAc...) asparagine glycosylation occurs at asparagine 118. An LDL-receptor class A 2 domain is found at 123-160 (PCQESELHCILDDVCIPHTWRCDGHPDCLDSSDELSCD). 3 disulfides stabilise this stretch: cysteine 124–cysteine 137, cysteine 131–cysteine 150, and cysteine 144–cysteine 159. Ca(2+) is bound by residues tryptophan 142, aspartate 145, histidine 147, aspartate 149, aspartate 155, and glutamate 156. Asparagine 185 is a glycosylation site (N-linked (GlcNAc...) asparagine). The chain crosses the membrane as a helical span at residues 209–229 (VIAAAGVLSAILVSATLLILL). The Cytoplasmic portion of the chain corresponds to 230–260 (RLRGQGYLPPPGLLVAVKESLLLSERKTSLI).

In terms of assembly, interacts (via LDL-receptor class A domains) with TCN2.

It localises to the cell membrane. Functionally, receptor for transcobalamin saturated with cobalamin (TCbl). Plays an important role in cobalamin uptake. Plasma membrane protein that is expressed on follicular dendritic cells (FDC) and mediates interaction with germinal center B cells. Functions as a costimulator to promote B cell responses to antigenic stimuli; promotes B cell differentiation and proliferation. Germinal center-B (GC-B) cells differentiate into memory B-cells and plasma cells (PC) through interaction with T-cells and follicular dendritic cells (FDC). CD320 augments the proliferation of PC precursors generated by IL-10. This is CD320 antigen (Cd320) from Mus musculus (Mouse).